The primary structure comprises 334 residues: MGSIGSMNKPSEGMLMGLVQYPVPIVNSRRDIEASVDRICAATAATKAGYPGMDLIVWPEYSTQGLNTKKWVTEEFLMDVEEPLFQRYAQTCKENDVWGVFSIMERNPNKNQMPYNTAVIFNNKGELALKYRKLNPWVPIEPWMPGDLGQPVCDGPGGSKLSLCICHDGMFPEQAREAAYKGCNVYIRISGYSTQVNEQWILTNRSNAWHNLMYTAAVNLAGYDGVFYYFGEGQVCNFDGTTLVQGHRNPWEIVTAEVFPKMADQARTDWGLENNIFNVGTRGYVAHPGGVKDCPYTWVKDFAAGKYHLPWEDKIKIKDGSIYGYPTTGGRFGL.

Positions 14 to 260 (MLMGLVQYPV…WEIVTAEVFP (247 aa)) constitute a CN hydrolase domain. Catalysis depends on E60, which acts as the Proton acceptor. Residue K133 is the Proton donor of the active site. The active-site Nucleophile is C166.

The protein belongs to the carbon-nitrogen hydrolase superfamily. Aliphatic amidase family.

The catalysed reaction is formamide + H2O = formate + NH4(+). Functionally, is an aliphatic amidase with a restricted substrate specificity, as it only hydrolyzes formamide. This is Formamidase from Nitratidesulfovibrio vulgaris (strain DP4) (Desulfovibrio vulgaris).